The following is a 114-amino-acid chain: MLFKQLILVATALTTLAVATPAVMRRTEPASSCSTGPVNCCNSSGTAKDGNIAKELALLGIVVPDINALIGVSCSPITVIGAGGASCSSQTLCCEDNKYNGIVALGCIPVDISL.

A signal peptide spans 1 to 19 (MLFKQLILVATALTTLAVA). 4 disulfides stabilise this stretch: Cys33-Cys93, Cys40-Cys87, Cys41-Cys74, and Cys94-Cys107. Asn42 carries an N-linked (GlcNAc...) asparagine glycan.

The protein belongs to the fungal hydrophobin family. As to quaternary structure, self-assembles to form functional amyloid fibrils called rodlets. Self-assembly into fibrillar rodlets occurs spontaneously at hydrophobic:hydrophilic interfaces and the rodlets further associate laterally to form amphipathic monolayers.

It localises to the secreted. Its subcellular location is the cell wall. In terms of biological role, aerial growth, conidiation, and dispersal of filamentous fungi in the environment rely upon a capability of their secreting small amphipathic proteins called hydrophobins (HPBs) with low sequence identity. Class I can self-assemble into an outermost layer of rodlet bundles on aerial cell surfaces, conferring cellular hydrophobicity that supports fungal growth, development and dispersal; whereas Class II form highly ordered films at water-air interfaces through intermolecular interactions but contribute nothing to the rodlet structure. The polypeptide is Class I hydrophobin 6 (Pleurotus ostreatus (strain PC15) (Oyster mushroom)).